The primary structure comprises 140 residues: Mediator of RNA polymerase II transcription subunit 21 (140 aa).

Positions 52 to 130 form a coiled coil; sequence EERERTLEEL…CDELILKLAQ (79 aa).

This sequence belongs to the Mediator complex subunit 21 family. As to quaternary structure, component of the Mediator complex.

Its subcellular location is the nucleus. Component of the Mediator complex, a coactivator involved in the regulated transcription of nearly all RNA polymerase II-dependent genes. Mediator functions as a bridge to convey information from gene-specific regulatory proteins to the basal RNA polymerase II transcription machinery. Mediator is recruited to promoters by direct interactions with regulatory proteins and serves as a scaffold for the assembly of a functional preinitiation complex with RNA polymerase II and the general transcription factors. The sequence is that of Mediator of RNA polymerase II transcription subunit 21 (SRB7) from Yarrowia lipolytica (strain CLIB 122 / E 150) (Yeast).